Here is a 511-residue protein sequence, read N- to C-terminus: Phosphoenolpyruvate carboxylase (511 aa).

Belongs to the PEPCase type 2 family. In terms of assembly, homotetramer. The cofactor is Mg(2+).

It catalyses the reaction oxaloacetate + phosphate = phosphoenolpyruvate + hydrogencarbonate. Functionally, catalyzes the irreversible beta-carboxylation of phosphoenolpyruvate (PEP) to form oxaloacetate (OAA), a four-carbon dicarboxylic acid source for the tricarboxylic acid cycle. The sequence is that of Phosphoenolpyruvate carboxylase from Saccharolobus islandicus (strain L.S.2.15 / Lassen #1) (Sulfolobus islandicus).